The primary structure comprises 399 residues: S-adenosylmethionine synthase (399 aa).

ATP is bound at residue His-17. Asp-19 lines the Mg(2+) pocket. Glu-45 lines the K(+) pocket. L-methionine is bound by residues Glu-58 and Gln-101. Positions 101-111 (QSADIAMGVDQ) are flexible loop. Residues 177–179 (DGK), 244–245 (RF), Asp-253, 259–260 (RK), Ala-276, and Lys-280 each bind ATP. Asp-253 serves as a coordination point for L-methionine. Lys-284 contacts L-methionine.

The protein belongs to the AdoMet synthase family. In terms of assembly, homotetramer; dimer of dimers. Mg(2+) is required as a cofactor. It depends on K(+) as a cofactor.

The protein resides in the cytoplasm. The catalysed reaction is L-methionine + ATP + H2O = S-adenosyl-L-methionine + phosphate + diphosphate. It functions in the pathway amino-acid biosynthesis; S-adenosyl-L-methionine biosynthesis; S-adenosyl-L-methionine from L-methionine: step 1/1. Functionally, catalyzes the formation of S-adenosylmethionine (AdoMet) from methionine and ATP. The overall synthetic reaction is composed of two sequential steps, AdoMet formation and the subsequent tripolyphosphate hydrolysis which occurs prior to release of AdoMet from the enzyme. The chain is S-adenosylmethionine synthase from Bacillus anthracis (strain A0248).